Reading from the N-terminus, the 263-residue chain is Ribosomal RNA small subunit methyltransferase J (263 aa).

S-adenosyl-L-methionine is bound by residues 115–116 (RD), 131–132 (ER), and D181.

This sequence belongs to the methyltransferase superfamily. RsmJ family.

It localises to the cytoplasm. The enzyme catalyses guanosine(1516) in 16S rRNA + S-adenosyl-L-methionine = N(2)-methylguanosine(1516) in 16S rRNA + S-adenosyl-L-homocysteine + H(+). In terms of biological role, specifically methylates the guanosine in position 1516 of 16S rRNA. This is Ribosomal RNA small subunit methyltransferase J from Hahella chejuensis (strain KCTC 2396).